The chain runs to 950 residues: Bifunctional glutamine synthetase adenylyltransferase/adenylyl-removing enzyme (950 aa).

The interval 1 to 443 (MSLPSPLLPV…VFVTLIGDEE (443 aa)) is adenylyl removase. Residues 450-950 (ERHFNELWDM…WQEWLESSTI (501 aa)) are adenylyl transferase.

The protein belongs to the GlnE family. Mg(2+) is required as a cofactor.

It catalyses the reaction [glutamine synthetase]-O(4)-(5'-adenylyl)-L-tyrosine + phosphate = [glutamine synthetase]-L-tyrosine + ADP. The catalysed reaction is [glutamine synthetase]-L-tyrosine + ATP = [glutamine synthetase]-O(4)-(5'-adenylyl)-L-tyrosine + diphosphate. Functionally, involved in the regulation of glutamine synthetase GlnA, a key enzyme in the process to assimilate ammonia. When cellular nitrogen levels are high, the C-terminal adenylyl transferase (AT) inactivates GlnA by covalent transfer of an adenylyl group from ATP to specific tyrosine residue of GlnA, thus reducing its activity. Conversely, when nitrogen levels are low, the N-terminal adenylyl removase (AR) activates GlnA by removing the adenylyl group by phosphorolysis, increasing its activity. The regulatory region of GlnE binds the signal transduction protein PII (GlnB) which indicates the nitrogen status of the cell. The protein is Bifunctional glutamine synthetase adenylyltransferase/adenylyl-removing enzyme of Vibrio vulnificus (strain YJ016).